The chain runs to 229 residues: 2,3-bisphosphoglycerate-dependent phosphoglycerate mutase (229 aa).

Residues 7–14, 20–21, Arg-59, 86–89, Lys-97, 113–114, and 182–183 contribute to the substrate site; these read RHGQSEWN, TG, ERHY, RR, and GN. His-8 acts as the Tele-phosphohistidine intermediate in catalysis. Residue Glu-86 is the Proton donor/acceptor of the active site.

Belongs to the phosphoglycerate mutase family. BPG-dependent PGAM subfamily.

It carries out the reaction (2R)-2-phosphoglycerate = (2R)-3-phosphoglycerate. The protein operates within carbohydrate degradation; glycolysis; pyruvate from D-glyceraldehyde 3-phosphate: step 3/5. Functionally, catalyzes the interconversion of 2-phosphoglycerate and 3-phosphoglycerate. The polypeptide is 2,3-bisphosphoglycerate-dependent phosphoglycerate mutase (Listeria monocytogenes serovar 1/2a (strain ATCC BAA-679 / EGD-e)).